Here is a 186-residue protein sequence, read N- to C-terminus: Single-stranded DNA-binding protein 1 (186 aa).

Residues 1–108 (MDATVTVVGN…LEIDEIGPTL (108 aa)) form the SSB domain. The interval 119-186 (TQAGHGVSPD…EDFDSDEVPF (68 aa)) is disordered. Positions 175 to 186 (SYEDFDSDEVPF) are enriched in acidic residues.

As to quaternary structure, homotetramer.

The polypeptide is Single-stranded DNA-binding protein 1 (ssb1) (Tropheryma whipplei (strain Twist) (Whipple's bacillus)).